We begin with the raw amino-acid sequence, 328 residues long: Neuronal membrane glycoprotein M6-b (328 aa).

The tract at residues methionine 1–asparagine 22 is disordered. Residues glycine 71–phenylalanine 91 form a helical membrane-spanning segment. Asparagine 113 is a glycosylation site (N-linked (GlcNAc...) asparagine). 2 helical membrane passes run valine 130 to phenylalanine 150 and phenylalanine 176 to valine 196. Asparagine 217 carries N-linked (GlcNAc...) asparagine glycosylation. The helical transmembrane segment at phenylalanine 265–isoleucine 285 threads the bilayer. Serine 318, serine 320, and serine 326 each carry phosphoserine.

The protein belongs to the myelin proteolipid protein family. In terms of assembly, interacts with SERT. In terms of tissue distribution, widely expressed. In the brain, expressed in neurons and oligodendrocytes.

The protein resides in the membrane. The protein localises to the cell membrane. May be involved in neural development. Involved in regulation of osteoblast function and bone formation. Involved in matrix vesicle release by osteoblasts; this function seems to involve maintenance of the actin cytoskeleton. May be involved in cellular trafficking of SERT and thereby in regulation of serotonin uptake. The chain is Neuronal membrane glycoprotein M6-b (Gpm6b) from Mus musculus (Mouse).